Consider the following 545-residue polypeptide: Indole-3-pyruvate decarboxylase (545 aa).

Glu-48 serves as a coordination point for thiamine diphosphate. The interval 382 to 460 is thiamine pyrophosphate binding; sequence DCLFTAMDMI…VILFNNASWE (79 aa). Mg(2+) contacts are provided by Asp-429 and Asn-456.

Belongs to the TPP enzyme family. It depends on a metal cation as a cofactor. Thiamine diphosphate is required as a cofactor.

The enzyme catalyses indole-3-pyruvate + H(+) = indole-3-acetaldehyde + CO2. Its pathway is plant hormone metabolism; auxin biosynthesis. This is Indole-3-pyruvate decarboxylase (ipdC) from Azospirillum brasilense.